A 193-amino-acid chain; its full sequence is dCTP deaminase (193 aa).

Residues 110 to 115 (RSSLAR), Asp-128, 136 to 138 (VLE), Tyr-171, Lys-178, and Gln-182 each bind dCTP. Glu-138 serves as the catalytic Proton donor/acceptor. A disordered region spans residues 168–193 (DRPYNRRQDAKYKNQQGAVSSRIDED). The span at 170–179 (PYNRRQDAKY) shows a compositional bias: basic and acidic residues.

This sequence belongs to the dCTP deaminase family. Homotrimer.

It carries out the reaction dCTP + H2O + H(+) = dUTP + NH4(+). Its pathway is pyrimidine metabolism; dUMP biosynthesis; dUMP from dCTP (dUTP route): step 1/2. Functionally, catalyzes the deamination of dCTP to dUTP. This Photorhabdus laumondii subsp. laumondii (strain DSM 15139 / CIP 105565 / TT01) (Photorhabdus luminescens subsp. laumondii) protein is dCTP deaminase.